Here is a 90-residue protein sequence, read N- to C-terminus: UPF0297 protein Cthe_0151 (90 aa).

Belongs to the UPF0297 family.

The protein is UPF0297 protein Cthe_0151 of Acetivibrio thermocellus (strain ATCC 27405 / DSM 1237 / JCM 9322 / NBRC 103400 / NCIMB 10682 / NRRL B-4536 / VPI 7372) (Clostridium thermocellum).